The following is a 364-amino-acid chain: Aminomethyltransferase (364 aa).

This sequence belongs to the GcvT family. In terms of assembly, the glycine cleavage system is composed of four proteins: P, T, L and H.

It catalyses the reaction N(6)-[(R)-S(8)-aminomethyldihydrolipoyl]-L-lysyl-[protein] + (6S)-5,6,7,8-tetrahydrofolate = N(6)-[(R)-dihydrolipoyl]-L-lysyl-[protein] + (6R)-5,10-methylene-5,6,7,8-tetrahydrofolate + NH4(+). The glycine cleavage system catalyzes the degradation of glycine. The protein is Aminomethyltransferase of Escherichia coli O17:K52:H18 (strain UMN026 / ExPEC).